The primary structure comprises 169 residues: Secreted RxLR effector protein BLN03 (169 aa).

Residues 1 to 21 form the signal peptide; that stretch reads MRPRKYIVVVLLSIAYTMCLA. A dEER motif is present at residues 51-54; sequence TEER. The helical transmembrane segment at 149–169 threads the bilayer; the sequence is GSAFLFVIGFIVLLAFAMTAV.

The protein belongs to the RxLR effector family. As to quaternary structure, interacts with host transcription factor NAC069.

It is found in the secreted. The protein resides in the host membrane. In terms of biological role, secreted effector that inhibits stress-induced relocalization of the endoplasmic reticulum tail-anchored transcription factors to the nucleus, thus affecting stress responses. This Bremia lactucae (Lettuce downy mildew) protein is Secreted RxLR effector protein BLN03.